Reading from the N-terminus, the 462-residue chain is MSQMSSASVKFPDSVPGVDYPKQLQLKYLQVIFRHGERAPVKERLGSAGIPKDWKLCNNARRFFAQIKGEKEWSVLGFERKVESPVDTSLAAPTSDNSPSGVCIHGELTDFGRVTTRTLGEYLRERYVKQLKFLPDELNNYADVYMRATPMVRALESLEHVFSGLYPESKRKMGLPVIFTRNWSDENLLPNENNCPRLVQLYEEFAERAAKLYDPLLAGRASEMMSQFMNGQPVRVVSSHPRLSGLLDTINAAIGSHVDFNPNLRDEQWLRDAETAVVEEWFGGYKVSKLMRQLGAGSLLNDLSMRMENFVVAEKNGSPYHRLALYGAHDVTIAAILASLDAFDYRWPPFTSHLEMELFEDTSSKSDSQNQSGDNKTTDLKLFSDESTDASNSAIVAASNSARDMSDWYVRITYNSTPVVMGACRGQGYKGNDTICPLSIFKDTVRALKPVEYHTMCKPVKK.

The active-site Nucleophile is the H35. The Proton donor role is filled by D330.

It belongs to the histidine acid phosphatase family.

The protein resides in the mitochondrion. It carries out the reaction a phosphate monoester + H2O = an alcohol + phosphate. In Schizosaccharomyces pombe (strain 972 / ATCC 24843) (Fission yeast), this protein is Probable acid phosphatase SPBC4.06.